Consider the following 474-residue polypeptide: ATP synthase subunit beta (474 aa).

Residue 158–165 participates in ATP binding; the sequence is GGAGVGKT.

The protein belongs to the ATPase alpha/beta chains family. In terms of assembly, F-type ATPases have 2 components, CF(1) - the catalytic core - and CF(0) - the membrane proton channel. CF(1) has five subunits: alpha(3), beta(3), gamma(1), delta(1), epsilon(1). CF(0) has three main subunits: a(1), b(2) and c(9-12). The alpha and beta chains form an alternating ring which encloses part of the gamma chain. CF(1) is attached to CF(0) by a central stalk formed by the gamma and epsilon chains, while a peripheral stalk is formed by the delta and b chains.

Its subcellular location is the cell membrane. It carries out the reaction ATP + H2O + 4 H(+)(in) = ADP + phosphate + 5 H(+)(out). In terms of biological role, produces ATP from ADP in the presence of a proton gradient across the membrane. The catalytic sites are hosted primarily by the beta subunits. This is ATP synthase subunit beta from Tropheryma whipplei (strain Twist) (Whipple's bacillus).